Here is a 522-residue protein sequence, read N- to C-terminus: Ribonuclease Y (522 aa).

A helical membrane pass occupies residues 2–22; that stretch reads WVEILVGSSAAIISGAAGYLL. Positions 212–278 constitute a KH domain; it reads LINTVSIPSE…TKVIELLVED (67 aa). The HD domain occupies 338 to 431; sequence ALGHSLEVAH…VCAADTLSAA (94 aa).

It belongs to the RNase Y family.

The protein resides in the cell membrane. In terms of biological role, endoribonuclease that initiates mRNA decay. This Nitratiruptor sp. (strain SB155-2) protein is Ribonuclease Y.